The sequence spans 396 residues: Calreticulin (396 aa).

The N-terminal stretch at 1–15 (MKSLCLLAIVAVVSA) is a signal peptide. Cysteine 101 and cysteine 133 form a disulfide bridge. Residues tyrosine 105, lysine 107, tyrosine 124, and aspartate 131 each coordinate an alpha-D-glucoside. 7 tandem repeats follow at residues 186 to 197 (AQTGSLEEDWDL), 205 to 216 (DPDAKKPEDWDE), 222 to 233 (DAEDVKPEDWEK), 239 to 250 (DPDAKKPEDWDD), 254 to 264 (GEWEPPMIDNP), 268 to 278 (GEWKPKQIKNP), and 282 to 292 (GKWIHPEIENP). The segment at 186–250 (AQTGSLEEDW…DAKKPEDWDD (65 aa)) is 4 X approximate repeats. The interval 193 to 301 (EDWDLLPAKK…PEYTPDDELY (109 aa)) is P-domain. Residues 202-212 (KIKDPDAKKPE) are compositionally biased toward basic and acidic residues. The tract at residues 202–250 (KIKDPDAKKPEDWDEREYIDDAEDVKPEDWEKPEHIPDPDAKKPEDWDD) is disordered. Acidic residues predominate over residues 213 to 224 (DWDEREYIDDAE). The segment covering 225–246 (DVKPEDWEKPEHIPDPDAKKPE) has biased composition (basic and acidic residues). The 3 X approximate repeats stretch occupies residues 254–292 (GEWEPPMIDNPEYKGEWKPKQIKNPAYKGKWIHPEIENP). Positions 302–396 (LYENWGAIGF…KEEEEGHDEL (95 aa)) are C-domain. Residue aspartate 312 participates in an alpha-D-glucoside binding. Positions 342–380 (FDKLKTVEKEKKEKADEEARKVEEEARKKAEEEKEAKKD) are enriched in basic and acidic residues. The disordered stretch occupies residues 342–396 (FDKLKTVEKEKKEKADEEARKVEEEARKKAEEEKEAKKDDDEEEEKEEEEGHDEL). Residues 381-396 (DDEEEEKEEEEGHDEL) are compositionally biased toward acidic residues. A Prevents secretion from ER motif is present at residues 393-396 (HDEL).

This sequence belongs to the calreticulin family.

Its subcellular location is the endoplasmic reticulum lumen. Its function is as follows. Molecular calcium-binding chaperone promoting folding, oligomeric assembly and quality control in the ER via the calreticulin/calnexin cycle. This lectin may interact transiently with almost all of the monoglucosylated glycoproteins that are synthesized in the ER. Probably by controlling the folding of extracellular matrix protein unc-52/Perlecan, may play a role in the formation of fibrous organelles, a hemidesmosome-like structure attaching muscles to the epidermis. Protects dopaminergic neurons against oxidative stress-induced neurodegeneration. In Caenorhabditis briggsae, this protein is Calreticulin (crt-1).